The sequence spans 229 residues: Ribosomal RNA large subunit methyltransferase E (229 aa).

The disordered stretch occupies residues 1-20; sequence MSRAGNGGRQRIKTAKGRSA. S-adenosyl-L-methionine contacts are provided by glycine 75, tryptophan 77, aspartate 94, aspartate 110, and aspartate 134. The active-site Proton acceptor is lysine 174.

It belongs to the class I-like SAM-binding methyltransferase superfamily. RNA methyltransferase RlmE family.

It localises to the cytoplasm. The enzyme catalyses uridine(2552) in 23S rRNA + S-adenosyl-L-methionine = 2'-O-methyluridine(2552) in 23S rRNA + S-adenosyl-L-homocysteine + H(+). Its function is as follows. Specifically methylates the uridine in position 2552 of 23S rRNA at the 2'-O position of the ribose in the fully assembled 50S ribosomal subunit. The sequence is that of Ribosomal RNA large subunit methyltransferase E from Rhizorhabdus wittichii (strain DSM 6014 / CCUG 31198 / JCM 15750 / NBRC 105917 / EY 4224 / RW1) (Sphingomonas wittichii).